The chain runs to 766 residues: Probable beta-glucosidase K (766 aa).

Asn-19 carries an N-linked (GlcNAc...) asparagine glycan. The active site involves Asp-196. Asn-288, Asn-453, and Asn-748 each carry an N-linked (GlcNAc...) asparagine glycan. The region spanning 369–528 (EGQPGLGMRF…DPERAIARAV (160 aa)) is the PA14 domain. The interval 726-766 (LGRRGRSGSSPAVYRGRSNNVVNRTSHQGAQRISKGGFAAR) is disordered. Residues 742–756 (RSNNVVNRTSHQGAQ) show a composition bias toward polar residues.

The protein belongs to the glycosyl hydrolase 3 family.

Its subcellular location is the secreted. It catalyses the reaction Hydrolysis of terminal, non-reducing beta-D-glucosyl residues with release of beta-D-glucose.. It functions in the pathway glycan metabolism; cellulose degradation. In terms of biological role, beta-glucosidases are one of a number of cellulolytic enzymes involved in the degradation of cellulosic biomass. Catalyzes the last step releasing glucose from the inhibitory cellobiose. The sequence is that of Probable beta-glucosidase K (bglK) from Aspergillus fumigatus (strain CBS 144.89 / FGSC A1163 / CEA10) (Neosartorya fumigata).